We begin with the raw amino-acid sequence, 562 residues long: Laccase-2 (562 aa).

The signal sequence occupies residues 1-26 (MASAASSLPLLVSSLLLALFALGAHA). 2 Plastocyanin-like domains span residues 34 to 150 (DIVM…PAAG) and 160 to 312 (DEAE…YAGV). N-linked (GlcNAc...) asparagine glycans are attached at residues asparagine 39, asparagine 53, asparagine 72, and asparagine 80. Positions 84 and 86 each coordinate Cu cation. A glycan (N-linked (GlcNAc...) asparagine) is linked at asparagine 118. Cu cation contacts are provided by histidine 129 and histidine 131. N-linked (GlcNAc...) asparagine glycans are attached at residues asparagine 189, asparagine 244, asparagine 300, asparagine 328, asparagine 376, asparagine 386, asparagine 421, and asparagine 445. The Plastocyanin-like 3 domain maps to 411 to 546 (DFPDRPPARF…KMAFLVEDGS (136 aa)). Residues histidine 463, histidine 466, histidine 468, histidine 525, cysteine 526, histidine 527, and histidine 531 each coordinate Cu cation.

The protein belongs to the multicopper oxidase family. It depends on Cu cation as a cofactor.

The protein localises to the secreted. It is found in the extracellular space. The protein resides in the apoplast. The catalysed reaction is 4 hydroquinone + O2 = 4 benzosemiquinone + 2 H2O. In terms of biological role, lignin degradation and detoxification of lignin-derived products. The chain is Laccase-2 (LAC2) from Oryza sativa subsp. japonica (Rice).